The following is a 416-amino-acid chain: Probable pectate lyase 8 (416 aa).

The signal sequence occupies residues 1–24; it reads MAVTKLILFASALLLTALFIGVNA. N-linked (GlcNAc...) asparagine glycosylation is found at asparagine 23, asparagine 28, and asparagine 52. Aspartate 214, aspartate 238, and aspartate 242 together coordinate Ca(2+). Arginine 294 is an active-site residue.

Belongs to the polysaccharide lyase 1 family. The cofactor is Ca(2+).

The enzyme catalyses Eliminative cleavage of (1-&gt;4)-alpha-D-galacturonan to give oligosaccharides with 4-deoxy-alpha-D-galact-4-enuronosyl groups at their non-reducing ends.. It participates in glycan metabolism; pectin degradation; 2-dehydro-3-deoxy-D-gluconate from pectin: step 2/5. The chain is Probable pectate lyase 8 from Arabidopsis thaliana (Mouse-ear cress).